A 474-amino-acid polypeptide reads, in one-letter code: Dihydrolipoyl dehydrogenase (474 aa).

FAD contacts are provided by residues 36-45, K54, and G117; that span reads ERYNTLGGVC. Cysteines 45 and 50 form a disulfide. Residues 182–186 and E205 contribute to the NAD(+) site; that span reads GGGII. An N6-acetyllysine modification is found at K220. NAD(+)-binding positions include V238 and 270–273; that span reads AIGR. Residues D313 and A321 each coordinate FAD. H445 functions as the Proton acceptor in the catalytic mechanism.

It belongs to the class-I pyridine nucleotide-disulfide oxidoreductase family. As to quaternary structure, homodimer. The cofactor is FAD.

The protein localises to the cytoplasm. The enzyme catalyses N(6)-[(R)-dihydrolipoyl]-L-lysyl-[protein] + NAD(+) = N(6)-[(R)-lipoyl]-L-lysyl-[protein] + NADH + H(+). Lipoamide dehydrogenase is a component of the glycine cleavage system as well as of the alpha-ketoacid dehydrogenase complexes. The chain is Dihydrolipoyl dehydrogenase (lpdA) from Shigella flexneri.